A 401-amino-acid polypeptide reads, in one-letter code: Dual specificity mitogen-activated protein kinase kinase 2 (401 aa).

Met1 carries the post-translational modification N-acetylmethionine. At Ser23 the chain carries Phosphoserine. The region spanning 72–370 is the Protein kinase domain; it reads FERISELGAG…LKLLMNHAFI (299 aa). Residues 78–86 and Lys101 each bind ATP; that span reads LGAGNGGVV. Residue Asp194 is the Proton acceptor of the active site. Phosphoserine; by RAF occurs at positions 222 and 226. Positions 282-310 are disordered; that stretch reads PVVDGADGEPHSVSPRPRPPGRPISVGHG. A phosphoserine mark is found at Ser293, Ser295, and Ser306. Phosphothreonine occurs at positions 395 and 397.

Belongs to the protein kinase superfamily. STE Ser/Thr protein kinase family. MAP kinase kinase subfamily. As to quaternary structure, interacts with MORG1. Interacts with SGK1. Interacts with KSR1. Interacts with KSR1 and BRAF; the interaction with KSR1 mediates KSR1-BRAF dimerization. Interacts with GLS. It depends on Mg(2+) as a cofactor. Post-translationally, phosphorylation on Ser/Thr by MAP kinase kinase kinases (RAF or MEKK1) positively regulates the kinase activity. Phosphorylated by MAP2K1/MEK1. Low levels of autophosphorylation have been observed. Expressed in adult intestine, kidney, liver, lung, pancreas, spleen, thymus, and at high levels in the neonatal brain. Lower expression is found in adult brain and heart.

It localises to the cytoplasm. It is found in the membrane. The catalysed reaction is L-seryl-[protein] + ATP = O-phospho-L-seryl-[protein] + ADP + H(+). The enzyme catalyses L-threonyl-[protein] + ATP = O-phospho-L-threonyl-[protein] + ADP + H(+). It catalyses the reaction L-tyrosyl-[protein] + ATP = O-phospho-L-tyrosyl-[protein] + ADP + H(+). Its activity is regulated as follows. Inhibited by serine/threonine phosphatase 2A. Catalyzes the concomitant phosphorylation of a threonine and a tyrosine residue in a Thr-Glu-Tyr sequence located in MAP kinases. Activates the ERK1 and ERK2 MAP kinases. Activates BRAF in a KSR1 or KSR2-dependent manner; by binding to KSR1 or KSR2 releases the inhibitory intramolecular interaction between KSR1 or KSR2 protein kinase and N-terminal domains which promotes KSR1 or KSR2-BRAF dimerization and BRAF activation. This is Dual specificity mitogen-activated protein kinase kinase 2 (Map2k2) from Mus musculus (Mouse).